A 459-amino-acid polypeptide reads, in one-letter code: Friend virus susceptibility protein 1 (459 aa).

Residues 192-269 form a disordered region; it reads EAELPTVLAS…LNSLAHSNRQ (78 aa). Basic and acidic residues predominate over residues 213–223; sequence SKERTQQDKAD. The span at 226-238 shows a compositional bias: polar residues; it reads QIQSSTSLVTSEP.

Retroviral restriction factor that prevents infection by gammaretroviruses. Acts by interacting with the capsid protein ca after entry of the virus into the cell. This interaction presumably disrupt the capsid thereby inactivating the viral genome, making it unable to enter host nucleus and integrate into host genome. This chain is Friend virus susceptibility protein 1 (Fv1), found in Mus musculus (Mouse).